Consider the following 168-residue polypeptide: 2-C-methyl-D-erythritol 2,4-cyclodiphosphate synthase (168 aa).

Positions 13 and 15 each coordinate a divalent metal cation. 4-CDP-2-C-methyl-D-erythritol 2-phosphate contacts are provided by residues 13 to 15 and 39 to 40; these read DVH and HS. His47 provides a ligand contact to a divalent metal cation. 4-CDP-2-C-methyl-D-erythritol 2-phosphate-binding positions include 61 to 63, 66 to 70, Phe144, and Lys147; these read DIG and FPDTD.

Belongs to the IspF family. Homotrimer. A divalent metal cation is required as a cofactor.

It carries out the reaction 4-CDP-2-C-methyl-D-erythritol 2-phosphate = 2-C-methyl-D-erythritol 2,4-cyclic diphosphate + CMP. Its pathway is isoprenoid biosynthesis; isopentenyl diphosphate biosynthesis via DXP pathway; isopentenyl diphosphate from 1-deoxy-D-xylulose 5-phosphate: step 4/6. Functionally, involved in the biosynthesis of isopentenyl diphosphate (IPP) and dimethylallyl diphosphate (DMAPP), two major building blocks of isoprenoid compounds. Catalyzes the conversion of 4-diphosphocytidyl-2-C-methyl-D-erythritol 2-phosphate (CDP-ME2P) to 2-C-methyl-D-erythritol 2,4-cyclodiphosphate (ME-CPP) with a corresponding release of cytidine 5-monophosphate (CMP). The protein is 2-C-methyl-D-erythritol 2,4-cyclodiphosphate synthase of Cupriavidus metallidurans (strain ATCC 43123 / DSM 2839 / NBRC 102507 / CH34) (Ralstonia metallidurans).